Consider the following 532-residue polypeptide: Bifunctional purine biosynthesis protein PurH (532 aa).

One can recognise an MGS-like domain in the interval 1–147; sequence MAKIKRALIS…KNYRSVTVVT (147 aa).

It belongs to the PurH family.

The catalysed reaction is (6R)-10-formyltetrahydrofolate + 5-amino-1-(5-phospho-beta-D-ribosyl)imidazole-4-carboxamide = 5-formamido-1-(5-phospho-D-ribosyl)imidazole-4-carboxamide + (6S)-5,6,7,8-tetrahydrofolate. It catalyses the reaction IMP + H2O = 5-formamido-1-(5-phospho-D-ribosyl)imidazole-4-carboxamide. Its pathway is purine metabolism; IMP biosynthesis via de novo pathway; 5-formamido-1-(5-phospho-D-ribosyl)imidazole-4-carboxamide from 5-amino-1-(5-phospho-D-ribosyl)imidazole-4-carboxamide (10-formyl THF route): step 1/1. The protein operates within purine metabolism; IMP biosynthesis via de novo pathway; IMP from 5-formamido-1-(5-phospho-D-ribosyl)imidazole-4-carboxamide: step 1/1. The sequence is that of Bifunctional purine biosynthesis protein PurH from Magnetococcus marinus (strain ATCC BAA-1437 / JCM 17883 / MC-1).